The following is a 21-amino-acid chain: Pseudogermin (21 aa).

Belongs to the germin family. As to quaternary structure, homotetramer.

It localises to the secreted. The protein localises to the extracellular space. It is found in the apoplast. The protein resides in the cell wall. Its function is as follows. May subsume the role of germin at the low water potentials during embryogenesis. This chain is Pseudogermin, found in Triticum aestivum (Wheat).